The sequence spans 475 residues: NADH-quinone oxidoreductase subunit N 1 (475 aa).

14 helical membrane passes run 8 to 28 (VMPL…EAAT), 36 to 56 (LFAI…PSEP), 67 to 87 (GGFF…ITLI), 100 to 120 (GEYY…SAAA), 122 to 142 (LTIL…LAGI), 157 to 177 (FLLG…IYGA), 199 to 219 (FLSG…AVPF), 244 to 264 (AAAL…LETF), 268 to 288 (PTAI…AALI), 295 to 315 (MFAY…ATGT), 322 to 342 (VLYY…IIIL), 366 to 386 (AFLM…GGFI), 403 to 423 (LAVA…RVVI), and 443 to 463 (ATIA…SLLI).

The protein belongs to the complex I subunit 2 family. NDH-1 is composed of 14 different subunits. Subunits NuoA, H, J, K, L, M, N constitute the membrane sector of the complex.

It is found in the cell inner membrane. It catalyses the reaction a quinone + NADH + 5 H(+)(in) = a quinol + NAD(+) + 4 H(+)(out). NDH-1 shuttles electrons from NADH, via FMN and iron-sulfur (Fe-S) centers, to quinones in the respiratory chain. The immediate electron acceptor for the enzyme in this species is believed to be a menaquinone. Couples the redox reaction to proton translocation (for every two electrons transferred, four hydrogen ions are translocated across the cytoplasmic membrane), and thus conserves the redox energy in a proton gradient. This Chloroherpeton thalassium (strain ATCC 35110 / GB-78) protein is NADH-quinone oxidoreductase subunit N 1.